The following is a 417-amino-acid chain: MLSTRVVRLPKVISGGNKQLARGLASLSDEKSLNEANPTDLAGLKRKAKRRPTKLADELKTGPSFADFVTGKAKDMLVDPLELARNDPNARLPSWLKTQIPKGKSFHHLKSDLKELKLSTVCEEAKCPNIGECWGGKKSEATATIMLMGDTCTRGCRFCSVKTNRNPAPPDPNEPENTAEAISRWGLGYVVLTTVDRDDLPDGGAHHLASTVTKIKEKAPQILVECLSGDFRGNLEMAKVLASSPLDVFAHNLETVEDLTPHIRDRRATYRQSLSVLRAAKEANPRLVTKTSLMLGFGETDDQILQTLHDLRNISCDVVTFGQYMRPTKRHMKVVEYVTPSKFEYWRDKALEMGFLYCASGPLVRSSYKAGEAFIENVIKKRRTNVGAIEEQQHDKENNNLLLSKEDEKTTQEKANF.

Residues 35-56 (EANPTDLAGLKRKAKRRPTKLA) form a disordered region. The segment covering 44-53 (LKRKAKRRPT) has biased composition (basic residues). [4Fe-4S] cluster contacts are provided by cysteine 122, cysteine 127, cysteine 133, cysteine 152, cysteine 156, cysteine 159, and serine 367. Positions 137–356 (KKSEATATIM…RDKALEMGFL (220 aa)) constitute a Radical SAM core domain. A disordered region spans residues 389-417 (IEEQQHDKENNNLLLSKEDEKTTQEKANF). Residues 391 to 417 (EQQHDKENNNLLLSKEDEKTTQEKANF) are compositionally biased toward basic and acidic residues.

Belongs to the radical SAM superfamily. Lipoyl synthase family. It depends on [4Fe-4S] cluster as a cofactor.

The protein localises to the mitochondrion. The catalysed reaction is [[Fe-S] cluster scaffold protein carrying a second [4Fe-4S](2+) cluster] + N(6)-octanoyl-L-lysyl-[protein] + 2 oxidized [2Fe-2S]-[ferredoxin] + 2 S-adenosyl-L-methionine + 4 H(+) = [[Fe-S] cluster scaffold protein] + N(6)-[(R)-dihydrolipoyl]-L-lysyl-[protein] + 4 Fe(3+) + 2 hydrogen sulfide + 2 5'-deoxyadenosine + 2 L-methionine + 2 reduced [2Fe-2S]-[ferredoxin]. The protein operates within protein modification; protein lipoylation via endogenous pathway; protein N(6)-(lipoyl)lysine from octanoyl-[acyl-carrier-protein]: step 2/2. In terms of biological role, catalyzes the radical-mediated insertion of two sulfur atoms into the C-6 and C-8 positions of the octanoyl moiety bound to the lipoyl domains of lipoate-dependent enzymes, thereby converting the octanoylated domains into lipoylated derivatives. The sequence is that of Lipoyl synthase, mitochondrial from Komagataella phaffii (strain GS115 / ATCC 20864) (Yeast).